The chain runs to 309 residues: Histone-lysine N-methyltransferase SETMAR (309 aa).

In terms of domain architecture, Pre-SET spans 74-137; sequence PGCACIETPC…RCRNRVVQNG (64 aa). Zn(2+) contacts are provided by cysteine 76, cysteine 78, cysteine 83, cysteine 88, cysteine 90, cysteine 119, cysteine 123, cysteine 125, and cysteine 129. An SET domain is found at 140 to 264; the sequence is FLLQVFQTEK…PGEELSYDYS (125 aa). Residues 150 to 152, tyrosine 193, arginine 221, and 224 to 225 each bind S-adenosyl-L-methionine; these read KGW and NH. 4 residues coordinate Zn(2+): cysteine 227, cysteine 288, cysteine 290, and cysteine 295. A Post-SET domain is found at 284 to 300; sequence PRKPCYCGAQSCTTFLP.

This sequence belongs to the class V-like SAM-binding methyltransferase superfamily.

It localises to the nucleus. The protein localises to the chromosome. The enzyme catalyses L-lysyl(36)-[histone H3] + 2 S-adenosyl-L-methionine = N(6),N(6)-dimethyl-L-lysyl(36)-[histone H3] + 2 S-adenosyl-L-homocysteine + 2 H(+). Its function is as follows. Histone methyltransferase that methylates 'Lys-4' and 'Lys-36' of histone H3, 2 specific tags for epigenetic transcriptional activation. Specifically mediates dimethylation of H3 'Lys-36'. This is Histone-lysine N-methyltransferase SETMAR from Mus musculus (Mouse).